Consider the following 300-residue polypeptide: Transacylase cctO (300 aa).

A helical membrane pass occupies residues 52-72 (IVYVSLTFFVVSIGLNFILAI). Short sequence motifs (HXXHC) lie at residues 185 to 189 (HQLGC) and 225 to 229 (HVDQC). Residue Asn270 is glycosylated (N-linked (GlcNAc...) asparagine).

This sequence belongs to the ustYa family.

The protein localises to the membrane. It functions in the pathway mycotoxin biosynthesis. Its function is as follows. Transacylase; part of the gene cluster that mediates the biosynthesis of the mycotoxin cyclochlorotine, a hepatotoxic and carcinogenic cyclic chlorinated pentapeptide. Within the pathway, cctO catalyzes the intramolecular O,N-transacylation from isocyclochlorotine to cyclochlorotine. The NRPS cctN initially catalyzes the condensation of L-serine (Ser), Pro, L-2-aminobutyrate (2Abu), Ser, and beta-Phe in this order to produce isocyclotine. After the dichlorination of Pro2 catalyzed by cctP2 to produce isocyclochlorotine, the cctO-mediated transacylation of isocyclochlorotine can furnish cyclochlorotine. The subsequent hydroxylation of cyclochlorotine by cctR yields hydroxycyclochlorotine as the final product. CctP1 probably acts as a phenylalanine aminomutase and provides the uncommon building block beta-Phe. Furthermore, 2Abu can be synthesized from threonine by one of the threonine dehydratases and transaminases localized outside of the cluster. The functions of the remaining proteins encoded by the cluster, cctM and cctT, have not been identified yet. This Talaromyces islandicus (Penicillium islandicum) protein is Transacylase cctO.